Reading from the N-terminus, the 335-residue chain is Serpentine receptor class alpha-25 (335 aa).

5 helical membrane-spanning segments follow: residues 22–42 (IPVKISFLIIATVIFLSFYFA), 151–171 (LLIIQCLLSFGTYYVGLYGVP), 195–215 (FRTVVMVFCIIVIIFVYYLSV), 245–265 (CILIVLQFACILMSSYGVNYI), and 280–300 (LAPFFAGVTYASLCLPLVIYF).

It belongs to the nematode receptor-like protein sra family.

The protein resides in the membrane. The chain is Serpentine receptor class alpha-25 (sra-25) from Caenorhabditis elegans.